A 121-amino-acid chain; its full sequence is Large ribosomal subunit protein bL19 (121 aa).

Belongs to the bacterial ribosomal protein bL19 family.

Its function is as follows. This protein is located at the 30S-50S ribosomal subunit interface and may play a role in the structure and function of the aminoacyl-tRNA binding site. This is Large ribosomal subunit protein bL19 from Chlorobaculum tepidum (strain ATCC 49652 / DSM 12025 / NBRC 103806 / TLS) (Chlorobium tepidum).